The primary structure comprises 389 residues: Phospho-N-acetylmuramoyl-pentapeptide-transferase (389 aa).

Transmembrane regions (helical) follow at residues Tyr21 to Gly41, Thr71 to Ala91, Phe97 to Tyr117, Phe134 to Ala154, Trp167 to Phe187, Val190 to Thr210, Gly222 to Val242, Ala259 to Phe279, Val286 to Ile306, Ile311 to Val331, and Gln366 to Leu386.

Belongs to the glycosyltransferase 4 family. MraY subfamily. Mg(2+) is required as a cofactor.

It localises to the cell inner membrane. The catalysed reaction is UDP-N-acetyl-alpha-D-muramoyl-L-alanyl-gamma-D-glutamyl-meso-2,6-diaminopimeloyl-D-alanyl-D-alanine + di-trans,octa-cis-undecaprenyl phosphate = di-trans,octa-cis-undecaprenyl diphospho-N-acetyl-alpha-D-muramoyl-L-alanyl-D-glutamyl-meso-2,6-diaminopimeloyl-D-alanyl-D-alanine + UMP. Its pathway is cell wall biogenesis; peptidoglycan biosynthesis. Functionally, catalyzes the initial step of the lipid cycle reactions in the biosynthesis of the cell wall peptidoglycan: transfers peptidoglycan precursor phospho-MurNAc-pentapeptide from UDP-MurNAc-pentapeptide onto the lipid carrier undecaprenyl phosphate, yielding undecaprenyl-pyrophosphoryl-MurNAc-pentapeptide, known as lipid I. The sequence is that of Phospho-N-acetylmuramoyl-pentapeptide-transferase from Bordetella petrii (strain ATCC BAA-461 / DSM 12804 / CCUG 43448).